We begin with the raw amino-acid sequence, 357 residues long: Probable cinnamyl alcohol dehydrogenase (357 aa).

A Zn(2+)-binding site is contributed by C47. S49 is a binding site for NADP(+). Residues H69, E70, C100, C103, C106, C114, and C163 each coordinate Zn(2+). Residues T167, 188 to 193 (GLGGVG), 211 to 216 (SSSDKK), T251, G275, and 298 to 300 (SFI) each bind NADP(+).

This sequence belongs to the zinc-containing alcohol dehydrogenase family. Homodimer. The cofactor is Zn(2+).

It catalyses the reaction (E)-cinnamyl alcohol + NADP(+) = (E)-cinnamaldehyde + NADPH + H(+). The catalysed reaction is (E)-coniferol + NADP(+) = (E)-coniferaldehyde + NADPH + H(+). The enzyme catalyses (E)-sinapyl alcohol + NADP(+) = (E)-sinapaldehyde + NADPH + H(+). It carries out the reaction (E)-4-coumaroyl alcohol + NADP(+) = (E)-4-coumaraldehyde + NADPH + H(+). It catalyses the reaction (E)-caffeyl alcohol + NADP(+) = (E)-caffeyl aldehyde + NADPH + H(+). It functions in the pathway aromatic compound metabolism; phenylpropanoid biosynthesis. In terms of biological role, involved in lignin biosynthesis. Catalyzes the final step specific for the production of lignin monomers. Catalyzes the NADPH-dependent reduction of coniferaldehyde, 5-hydroxyconiferaldehyde, sinapaldehyde, 4-coumaraldehyde and caffeyl aldehyde to their respective alcohols. In Pinus taeda (Loblolly pine), this protein is Probable cinnamyl alcohol dehydrogenase.